The chain runs to 265 residues: Thioredoxin-related transmembrane protein 2 homolog (265 aa).

A signal peptide spans 1-32 (MLIPRLDEVRRALTAFHFFNTLLALAFPVIRS). The Extracellular segment spans residues 33 to 96 (TSLCDYVFAV…KIAGMFLFIR (64 aa)). The chain crosses the membrane as a helical span at residues 97–117 (ADILPGIIYILACLIVTVLFP). The Cytoplasmic segment spans residues 118–265 (EPVYNGPEQV…KKGAKAKKED (148 aa)). The 105-residue stretch at 126–230 (QVTYFQGEQL…RPLVNDSRRA (105 aa)) folds into the Thioredoxin domain. The Di-lysine motif motif lies at 262 to 265 (KKED).

It localises to the membrane. This is Thioredoxin-related transmembrane protein 2 homolog from Caenorhabditis elegans.